A 271-amino-acid chain; its full sequence is MPELPEVEVTRQGIAPYLVEQTVIDLVIRNGSLRWPVPDIAKQIIGQVIRQVRRRAKYLLIDTDAGTSIVHLGMSGSLRILPHDTPVEKHDHIDLVLANGRILRFNDPRRFGAWLWCELPEEAHPLLAKLGPEPLTNAFNVKQLAAALTGKKKAIKLCLMDNHIVVGVGNIYANEALFAAGIHPEAEAGKIDIERLTVLVAEVKQILAHAIKQGGTTLKDFTNADGKPGYFAQKLHVYGRGGETCTSCGNLLSEIRLGQRTTVFCGICQTR.

The Schiff-base intermediate with DNA role is filled by Pro-2. Glu-3 serves as the catalytic Proton donor. Lys-57 acts as the Proton donor; for beta-elimination activity in catalysis. The DNA site is built by His-90, Arg-109, and Lys-151. The FPG-type zinc finger occupies 236–270 (HVYGRGGETCTSCGNLLSEIRLGQRTTVFCGICQT). The active-site Proton donor; for delta-elimination activity is the Arg-260.

This sequence belongs to the FPG family. As to quaternary structure, monomer. Zn(2+) is required as a cofactor.

It carries out the reaction Hydrolysis of DNA containing ring-opened 7-methylguanine residues, releasing 2,6-diamino-4-hydroxy-5-(N-methyl)formamidopyrimidine.. The enzyme catalyses 2'-deoxyribonucleotide-(2'-deoxyribose 5'-phosphate)-2'-deoxyribonucleotide-DNA = a 3'-end 2'-deoxyribonucleotide-(2,3-dehydro-2,3-deoxyribose 5'-phosphate)-DNA + a 5'-end 5'-phospho-2'-deoxyribonucleoside-DNA + H(+). Involved in base excision repair of DNA damaged by oxidation or by mutagenic agents. Acts as a DNA glycosylase that recognizes and removes damaged bases. Has a preference for oxidized purines, such as 7,8-dihydro-8-oxoguanine (8-oxoG). Has AP (apurinic/apyrimidinic) lyase activity and introduces nicks in the DNA strand. Cleaves the DNA backbone by beta-delta elimination to generate a single-strand break at the site of the removed base with both 3'- and 5'-phosphates. The sequence is that of Formamidopyrimidine-DNA glycosylase from Shewanella sp. (strain W3-18-1).